We begin with the raw amino-acid sequence, 539 residues long: Sorting nexin-27 (539 aa).

The segment at 1-40 (MADEDGEGIHPSTPHRNGGGGGGSGLHCAGNGGGGGGGPR) is disordered. The span at 17 to 39 (NGGGGGGSGLHCAGNGGGGGGGP) shows a compositional bias: gly residues. The PDZ domain maps to 41–134 (VVRIVKSESG…ELILTVLSVP (94 aa)). 2 positions are modified to phosphoserine: Ser-49 and Ser-60. Residues 159 to 267 (QAVPISVPTY…EFLSESDENY (109 aa)) form the PX domain. Residues 271-360 (SDVELRVALP…TCLTIRKWLF (90 aa)) enclose the Ras-associating domain. An FERM-like region F1 region spans residues 271 to 360 (SDVELRVALP…TCLTIRKWLF (90 aa)). The FERM-like region F2 stretch occupies residues 371-419 (NDLAVTYFFHQAVDDVKKGYIKAEEKSYQLQKLYEQRKMVMYLNMLRTC). The tract at residues 423 to 523 (NEIIFPHCAC…RVFCELKWRK (101 aa)) is FERM-like region F3.

In terms of assembly, core component of the SNX27-retromer, a multiprotein complex composed of SNX27, the WASH complex and the retromer complex. Interacts (via PDZ domain) with a number of target transmembrane proteins (via PDZ-binding motif): ABCC4, ADRB2, ARHGEF7, GRIA1, GRIA2, GRIN1, GRIN2A GRIN2C, KCNJ6, KCNJ9 and SLC2A1/GLUT1. Interacts (via the FERM-like regions) with the WASH complex. Interacts with SNX1. Interacts with CYTIP. Interacts with DGKZ. Interacts with MCC. Interacts (via PDZ domains) with SLC9A3; directs SLC9A3 membrane insertion from early endosomes to the plasma membrane. Isoform 1 is predominantly expressed in the testis, whereas isoform 2 is predominant in various brain regions, including, neocortex, paleocortex, striatum, hippocampus, cerebellum and brain stem. Expressed in cells of hematopoietic origin.

It localises to the early endosome membrane. The protein localises to the cytoplasm. The protein resides in the cytosol. Involved in the retrograde transport from endosome to plasma membrane, a trafficking pathway that promotes the recycling of internalized transmembrane proteins. Following internalization, endocytosed transmembrane proteins are delivered to early endosomes and recycled to the plasma membrane instead of being degraded in lysosomes. SNX27 specifically binds and directs sorting of a subset of transmembrane proteins containing a PDZ-binding motif at the C-terminus: following interaction with target transmembrane proteins, associates with the retromer complex, preventing entry into the lysosomal pathway, and promotes retromer-tubule based plasma membrane recycling. SNX27 also binds with the WASH complex. Interacts with membranes containing phosphatidylinositol-3-phosphate (PtdIns(3P)). May participate in establishment of natural killer cell polarity. Recruits CYTIP to early endosomes. This is Sorting nexin-27 (Snx27) from Rattus norvegicus (Rat).